Consider the following 261-residue polypeptide: Ribosomal RNA small subunit methyltransferase G (261 aa).

Residues G94, L99, 117 to 119 (EST), 145 to 146 (VE), and R164 each bind S-adenosyl-L-methionine.

Belongs to the methyltransferase superfamily. RNA methyltransferase RsmG family.

It is found in the cytoplasm. Its function is as follows. Specifically methylates the N7 position of a guanine in 16S rRNA. This Rubrobacter xylanophilus (strain DSM 9941 / JCM 11954 / NBRC 16129 / PRD-1) protein is Ribosomal RNA small subunit methyltransferase G.